Reading from the N-terminus, the 787-residue chain is Probable basic-leucine zipper transcription factor J (787 aa).

Positions 18 to 90 are enriched in low complexity; that stretch reads NSNIHNNTHN…NNTQNTNNGT (73 aa). Disordered regions lie at residues 18-95, 153-173, 186-306, 343-372, 401-441, and 473-507; these read NSNI…LTPL, LNLS…NNNP, LQSQ…NNNT, DSLL…IQTS, LSSA…NNSN, and ASSE…DEDQ. Low complexity-rich tracts occupy residues 186-223, 235-258, 273-305, and 351-366; these read LQSQ…SSPI, SSPI…STSP, NNNN…LNNN, and NNNN…NNNN. The segment covering 473 to 483 has biased composition (low complexity); that stretch reads ASSESAQSESS. Positions 549-612 constitute a bZIP domain; that stretch reads ELKKQRRLVK…KALKKQLYSL (64 aa). A basic motif region spans residues 551–603; sequence KKQRRLVKNREYASQSRSRRKIYVENIETKLQKTNQDCASIKSQLNSVKEENK. A leucine-zipper region spans residues 605-612; it reads LKKQLYSL. Disordered regions lie at residues 723-747 and 763-787; these read SNYI…VVST and DKEV…SPLN. Residues 763–778 show a composition bias toward basic and acidic residues; it reads DKEVPQKCKDSSDLKC.

This sequence belongs to the bZIP family.

The protein resides in the nucleus. In terms of biological role, probable transcriptional regulator. This chain is Probable basic-leucine zipper transcription factor J (bzpJ), found in Dictyostelium discoideum (Social amoeba).